The following is a 431-amino-acid chain: Adenylosuccinate lyase (431 aa).

N(6)-(1,2-dicarboxyethyl)-AMP contacts are provided by residues Arg-4–Tyr-5, Arg-67–Asp-69, and Thr-93–Ser-94. His-141 acts as the Proton donor/acceptor in catalysis. Gln-212 contributes to the N(6)-(1,2-dicarboxyethyl)-AMP binding site. Ser-262 functions as the Proton donor/acceptor in the catalytic mechanism. Residues Ser-263, Lys-268–Asn-270, Asn-276, and Ser-307–Ile-311 each bind N(6)-(1,2-dicarboxyethyl)-AMP.

This sequence belongs to the lyase 1 family. Adenylosuccinate lyase subfamily. Homodimer and homotetramer. Residues from neighboring subunits contribute catalytic and substrate-binding residues to each active site.

The enzyme catalyses N(6)-(1,2-dicarboxyethyl)-AMP = fumarate + AMP. It carries out the reaction (2S)-2-[5-amino-1-(5-phospho-beta-D-ribosyl)imidazole-4-carboxamido]succinate = 5-amino-1-(5-phospho-beta-D-ribosyl)imidazole-4-carboxamide + fumarate. It participates in purine metabolism; AMP biosynthesis via de novo pathway; AMP from IMP: step 2/2. The protein operates within purine metabolism; IMP biosynthesis via de novo pathway; 5-amino-1-(5-phospho-D-ribosyl)imidazole-4-carboxamide from 5-amino-1-(5-phospho-D-ribosyl)imidazole-4-carboxylate: step 2/2. Functionally, catalyzes two reactions in de novo purine nucleotide biosynthesis. Catalyzes the breakdown of 5-aminoimidazole- (N-succinylocarboxamide) ribotide (SAICAR or 2-[5-amino-1-(5-phospho-beta-D-ribosyl)imidazole-4-carboxamido]succinate) to 5-aminoimidazole-4-carboxamide ribotide (AICAR or 5-amino-1-(5-phospho-beta-D-ribosyl)imidazole-4-carboxamide) and fumarate, and of adenylosuccinate (ADS or N(6)-(1,2-dicarboxyethyl)-AMP) to adenosine monophosphate (AMP) and fumarate. The protein is Adenylosuccinate lyase (purB) of Staphylococcus saprophyticus subsp. saprophyticus (strain ATCC 15305 / DSM 20229 / NCIMB 8711 / NCTC 7292 / S-41).